A 236-amino-acid polypeptide reads, in one-letter code: 2-C-methyl-D-erythritol 4-phosphate cytidylyltransferase (236 aa).

Belongs to the IspD/TarI cytidylyltransferase family. IspD subfamily. As to quaternary structure, homodimer.

The catalysed reaction is 2-C-methyl-D-erythritol 4-phosphate + CTP + H(+) = 4-CDP-2-C-methyl-D-erythritol + diphosphate. It participates in isoprenoid biosynthesis; isopentenyl diphosphate biosynthesis via DXP pathway; isopentenyl diphosphate from 1-deoxy-D-xylulose 5-phosphate: step 2/6. Functionally, catalyzes the formation of 4-diphosphocytidyl-2-C-methyl-D-erythritol from CTP and 2-C-methyl-D-erythritol 4-phosphate (MEP). The sequence is that of 2-C-methyl-D-erythritol 4-phosphate cytidylyltransferase from Salmonella heidelberg (strain SL476).